A 110-amino-acid chain; its full sequence is Protein ripply3 (110 aa).

The short motif at 18–21 (WRPW) is the WRPW motif element. The interval 50–85 (HPVRLFLPRSRMQEYLSRLGSSVLASFPVQATLHFY) is ripply homology domain. Residues 87-99 (DEDSSSEEEEDEE) are compositionally biased toward acidic residues. Positions 87–110 (DEDSSSEEEEDEEHANTRCRLWRP) are disordered.

This sequence belongs to the ripply family.

The protein localises to the nucleus. Functionally, probable transcriptional regulator involved in developmental processes. This is Protein ripply3 (ripply3) from Danio rerio (Zebrafish).